Here is an 89-residue protein sequence, read N- to C-terminus: Small ribosomal subunit protein uS15 (89 aa).

It belongs to the universal ribosomal protein uS15 family. As to quaternary structure, part of the 30S ribosomal subunit. Forms a bridge to the 50S subunit in the 70S ribosome, contacting the 23S rRNA.

In terms of biological role, one of the primary rRNA binding proteins, it binds directly to 16S rRNA where it helps nucleate assembly of the platform of the 30S subunit by binding and bridging several RNA helices of the 16S rRNA. Forms an intersubunit bridge (bridge B4) with the 23S rRNA of the 50S subunit in the ribosome. The polypeptide is Small ribosomal subunit protein uS15 (Streptococcus uberis (strain ATCC BAA-854 / 0140J)).